Consider the following 481-residue polypeptide: Cysteine--tRNA ligase (481 aa).

Cysteine 29 provides a ligand contact to Zn(2+). Positions 31 to 41 match the 'HIGH' region motif; the sequence is PTVYDYSHLGH. Zn(2+) contacts are provided by cysteine 210, histidine 235, and glutamate 239. Residues 272–276 carry the 'KMSKS' region motif; that stretch reads KMSKS. Lysine 275 is an ATP binding site.

The protein belongs to the class-I aminoacyl-tRNA synthetase family. Monomer. It depends on Zn(2+) as a cofactor.

It localises to the cytoplasm. It carries out the reaction tRNA(Cys) + L-cysteine + ATP = L-cysteinyl-tRNA(Cys) + AMP + diphosphate. This Anaeromyxobacter dehalogenans (strain 2CP-C) protein is Cysteine--tRNA ligase.